Reading from the N-terminus, the 309-residue chain is Replication factor C subunit 4 (309 aa).

ATP is bound by residues valine 5, valine 17, 42–50, asparagine 134, and arginine 192; that span reads GPPGTGKTT.

The protein belongs to the activator 1 small subunits family. As to quaternary structure, component of the replication factor C (RFC) complex.

It is found in the nucleus. Functionally, component of ATP-dependent clamp loader (RFC and RFC-like) complexes for DNA clamps. During a clamp loading circle, the RFC:clamp complex binds to DNA and the recognition of the double-stranded/single-stranded junction stimulates ATP hydrolysis by RFC. The complex presumably provides bipartite ATP sites in which one subunit supplies a catalytic site for hydrolysis of ATP bound to the neighboring subunit. Dissociation of RFC from the clamp leaves the clamp encircling DNA. Component of the replication factor C (RFC or activator 1) complex which acts during elongation of primed DNA templates by DNA polymerase delta and epsilon. RFC has an essential but redundant activity in sister chromatid cohesion establishment. This chain is Replication factor C subunit 4 (RFC4), found in Encephalitozoon cuniculi (strain GB-M1) (Microsporidian parasite).